Reading from the N-terminus, the 155-residue chain is Urease accessory protein UreE (155 aa).

Belongs to the UreE family.

The protein resides in the cytoplasm. Its function is as follows. Involved in urease metallocenter assembly. Binds nickel. Probably functions as a nickel donor during metallocenter assembly. The polypeptide is Urease accessory protein UreE (Deinococcus radiodurans (strain ATCC 13939 / DSM 20539 / JCM 16871 / CCUG 27074 / LMG 4051 / NBRC 15346 / NCIMB 9279 / VKM B-1422 / R1)).